We begin with the raw amino-acid sequence, 353 residues long: Trans-enoyl reductase eqxC (353 aa).

Val45–Lys48 is an NADP(+) binding site. Ile131–Leu138 contacts substrate. Residues Ser166 to Thr169, Ser189 to Asn192, Tyr207, and Leu254 to Glu255 each bind NADP(+). Gly275–Leu279 is a substrate binding site. Ile344–Ser345 contacts NADP(+).

This sequence belongs to the zinc-containing alcohol dehydrogenase family. As to quaternary structure, monomer.

It carries out the reaction L-serine + 7 malonyl-CoA + acetyl-CoA + 2 S-adenosyl-L-methionine + ATP + 8 NADPH + 11 H(+) = (5S)-3-[(2E,6R,8E,10E,12E)-2,6-dimethyltetradeca-2,8,10,12-tetraenoyl]-5-(hydroxymethyl)pyrrolidine-2,4-dione + AMP + 2 S-adenosyl-L-homocysteine + 7 CO2 + diphosphate + 8 NADP(+) + 8 CoA + 6 H2O. The protein operates within mycotoxin biosynthesis. Trans-enoyl reductase; part of the gene cluster that mediates the biosynthesis of equisetin, a trans-fused decalin-containing tetramic acid with antimicrobial activity. The PKS module of eqxS together with the enoylreductase eqxC catalyze the formation of the polyketide unit which is then conjugated to L-serine by the condensation domain of the eqxS NRPS module. Activity of the Dieckmann cyclase domain (RED) results in release of the Dieckmann product intermediate. Diels-Alderase eqx3 is involved in endo-selective Diels-Alder cycloaddition to form the decalin ring, leading to the production of N-desmethylequisetin also called trichosetin. Subsequent N-methylation is carried out by eqxD to give equisetin. This is Trans-enoyl reductase eqxC from Fusarium heterosporum.